A 269-amino-acid chain; its full sequence is Putative aga operon transcriptional repressor (269 aa).

The HTH deoR-type domain occupies 15–70 (TSERREQIIQRLRQQGSVQVNDLSALYGVSTVTIRNDLAFLEKQGIAVRAYGGALI). The H-T-H motif DNA-binding region spans 32–51 (VQVNDLSALYGVSTVTIRND).

In terms of biological role, probable repressor for the aga operon for N-acetyl galactosamine transport and metabolism. The protein is Putative aga operon transcriptional repressor (agaR) of Escherichia coli O157:H7.